A 272-amino-acid chain; its full sequence is Dermonecrotic toxin StSicTox-betaIF1 (272 aa).

The active site involves histidine 5. Glutamate 25 and aspartate 27 together coordinate Mg(2+). Histidine 41 functions as the Nucleophile in the catalytic mechanism. Intrachain disulfides connect cysteine 45/cysteine 51 and cysteine 47/cysteine 189. Aspartate 85 contacts Mg(2+).

The protein belongs to the arthropod phospholipase D family. Class II subfamily. Mg(2+) is required as a cofactor. Expressed by the venom gland.

The protein localises to the secreted. It carries out the reaction an N-(acyl)-sphingosylphosphocholine = an N-(acyl)-sphingosyl-1,3-cyclic phosphate + choline. The enzyme catalyses an N-(acyl)-sphingosylphosphoethanolamine = an N-(acyl)-sphingosyl-1,3-cyclic phosphate + ethanolamine. The catalysed reaction is a 1-acyl-sn-glycero-3-phosphocholine = a 1-acyl-sn-glycero-2,3-cyclic phosphate + choline. It catalyses the reaction a 1-acyl-sn-glycero-3-phosphoethanolamine = a 1-acyl-sn-glycero-2,3-cyclic phosphate + ethanolamine. Functionally, dermonecrotic toxins cleave the phosphodiester linkage between the phosphate and headgroup of certain phospholipids (sphingolipid and lysolipid substrates), forming an alcohol (often choline) and a cyclic phosphate. This toxin acts on sphingomyelin (SM). It may also act on ceramide phosphoethanolamine (CPE), lysophosphatidylcholine (LPC) and lysophosphatidylethanolamine (LPE), but not on lysophosphatidylserine (LPS), and lysophosphatidylglycerol (LPG). It acts by transphosphatidylation, releasing exclusively cyclic phosphate products as second products. Induces dermonecrosis, hemolysis, increased vascular permeability, edema, inflammatory response, and platelet aggregation. The protein is Dermonecrotic toxin StSicTox-betaIF1 of Sicarius terrosus (Cave spider).